A 181-amino-acid chain; its full sequence is NADH-quinone oxidoreductase subunit B 2 (181 aa).

[4Fe-4S] cluster-binding residues include Cys44, Cys45, Cys110, and Cys139.

Belongs to the complex I 20 kDa subunit family. In terms of assembly, NDH-1 is composed of 14 different subunits. Subunits NuoB, C, D, E, F, and G constitute the peripheral sector of the complex. [4Fe-4S] cluster is required as a cofactor.

Its subcellular location is the cell inner membrane. It carries out the reaction a quinone + NADH + 5 H(+)(in) = a quinol + NAD(+) + 4 H(+)(out). In terms of biological role, NDH-1 shuttles electrons from NADH, via FMN and iron-sulfur (Fe-S) centers, to quinones in the respiratory chain. The immediate electron acceptor for the enzyme in this species is believed to be a menaquinone. Couples the redox reaction to proton translocation (for every two electrons transferred, four hydrogen ions are translocated across the cytoplasmic membrane), and thus conserves the redox energy in a proton gradient. The chain is NADH-quinone oxidoreductase subunit B 2 from Cytophaga hutchinsonii (strain ATCC 33406 / DSM 1761 / CIP 103989 / NBRC 15051 / NCIMB 9469 / D465).